The chain runs to 168 residues: Dual-action ribosomal maturation protein DarP (168 aa).

Belongs to the DarP family.

It is found in the cytoplasm. Functionally, member of a network of 50S ribosomal subunit biogenesis factors which assembles along the 30S-50S interface, preventing incorrect 23S rRNA structures from forming. Promotes peptidyl transferase center (PTC) maturation. In Neisseria meningitidis serogroup B (strain ATCC BAA-335 / MC58), this protein is Dual-action ribosomal maturation protein DarP.